Consider the following 155-residue polypeptide: SsrA-binding protein (155 aa).

Residues 135–147 (TIKRRDQERDIKK) are compositionally biased toward basic and acidic residues. The disordered stretch occupies residues 135–155 (TIKRRDQERDIKKQMKHYNAR).

Belongs to the SmpB family.

The protein resides in the cytoplasm. Its function is as follows. Required for rescue of stalled ribosomes mediated by trans-translation. Binds to transfer-messenger RNA (tmRNA), required for stable association of tmRNA with ribosomes. tmRNA and SmpB together mimic tRNA shape, replacing the anticodon stem-loop with SmpB. tmRNA is encoded by the ssrA gene; the 2 termini fold to resemble tRNA(Ala) and it encodes a 'tag peptide', a short internal open reading frame. During trans-translation Ala-aminoacylated tmRNA acts like a tRNA, entering the A-site of stalled ribosomes, displacing the stalled mRNA. The ribosome then switches to translate the ORF on the tmRNA; the nascent peptide is terminated with the 'tag peptide' encoded by the tmRNA and targeted for degradation. The ribosome is freed to recommence translation, which seems to be the essential function of trans-translation. The chain is SsrA-binding protein from Streptococcus pyogenes serotype M6 (strain ATCC BAA-946 / MGAS10394).